We begin with the raw amino-acid sequence, 754 residues long: Zinc finger protein with KRAB and SCAN domains 7 (754 aa).

Residue Lys28 forms a Glycyl lysine isopeptide (Lys-Gly) (interchain with G-Cter in SUMO2) linkage. The 83-residue stretch at 54–136 (RLHFRQLCYH…AVVEDFQRHL (83 aa)) folds into the SCAN box domain. The tract at residues 157-215 (TALGTTKESPPTSPLSGGSAPGAHLEPPYDPGTHHLPSGDFAQCTSPVPTLPQVGNSGD) is disordered. Polar residues-rich tracts occupy residues 158–172 (ALGT…SPLS) and 199–215 (QCTS…NSGD). A KRAB domain is found at 231-306 (VAYEDLSVDY…TSGGLFGVVP (76 aa)). 10 consecutive C2H2-type zinc fingers follow at residues 383–405 (YRCD…QRIH), 411–433 (YECN…LRTH), 439–461 (YECS…QRLH), 467–489 (YKCN…QRTH), 495–517 (YECN…QVLH), 523–545 (YKCN…QRIH), 551–573 (YECS…QSLH), 579–601 (YKCS…ERIH), 607–629 (FECS…QRLH), and 635–657 (YKCN…QRIH). The C2H2-type 11; degenerate zinc-finger motif lies at 663–685 (YECNECGKVFSYSSSLMVHQRTH). C2H2-type zinc fingers lie at residues 691 to 713 (YKCN…QRVH) and 719 to 741 (YECS…QRTH). Residues 735–754 (NHHQRTHTGEKSSGLAWSVS) form a disordered region.

Belongs to the krueppel C2H2-type zinc-finger protein family.

It is found in the nucleus. Functionally, may be involved in transcriptional regulation. This chain is Zinc finger protein with KRAB and SCAN domains 7 (ZKSCAN7), found in Homo sapiens (Human).